Here is a 238-residue protein sequence, read N- to C-terminus: Small ribosomal subunit protein uS3 (238 aa).

The region spanning 39-108 is the KH type-2 domain; it reads IRKFVKKKLF…NVAVNVIEVK (70 aa).

This sequence belongs to the universal ribosomal protein uS3 family. Part of the 30S ribosomal subunit. Forms a tight complex with proteins S10 and S14.

In terms of biological role, binds the lower part of the 30S subunit head. Binds mRNA in the 70S ribosome, positioning it for translation. This Alkaliphilus oremlandii (strain OhILAs) (Clostridium oremlandii (strain OhILAs)) protein is Small ribosomal subunit protein uS3.